The chain runs to 184 residues: Lipocalin-15 (184 aa).

A signal peptide spans Met1–Ala20. Cys83 and Cys176 are disulfide-bonded.

Belongs to the calycin superfamily. Lipocalin family.

It localises to the secreted. The chain is Lipocalin-15 (LCN15) from Homo sapiens (Human).